Consider the following 170-residue polypeptide: Macro domain-containing protein VPA0103 (170 aa).

Residues 1–170 enclose the Macro domain; that stretch reads MNAISLVQGD…SIWQHALTQH (170 aa).

Belongs to the MacroD-type family.

This Vibrio parahaemolyticus serotype O3:K6 (strain RIMD 2210633) protein is Macro domain-containing protein VPA0103.